Reading from the N-terminus, the 863-residue chain is Leucine--tRNA ligase (863 aa).

Positions Pro-42–His-52 match the 'HIGH' region motif. The 'KMSKS' region signature appears at Lys-618 to Ser-622. Residue Lys-621 coordinates ATP.

This sequence belongs to the class-I aminoacyl-tRNA synthetase family.

It is found in the cytoplasm. The catalysed reaction is tRNA(Leu) + L-leucine + ATP = L-leucyl-tRNA(Leu) + AMP + diphosphate. The polypeptide is Leucine--tRNA ligase (Desulfatibacillum aliphaticivorans).